Reading from the N-terminus, the 621-residue chain is UvrABC system protein C (621 aa).

The region spanning 13-92 (NEPGVYLMKN…IKKYSPKYNI (80 aa)) is the GIY-YIG domain. In terms of domain architecture, UVR spans 204–239 (RSLLNKLKEEMQSASGNLEFEKAASLRDKMIAIENI).

It belongs to the UvrC family. In terms of assembly, interacts with UvrB in an incision complex.

It is found in the cytoplasm. Functionally, the UvrABC repair system catalyzes the recognition and processing of DNA lesions. UvrC both incises the 5' and 3' sides of the lesion. The N-terminal half is responsible for the 3' incision and the C-terminal half is responsible for the 5' incision. The protein is UvrABC system protein C of Clostridium beijerinckii (strain ATCC 51743 / NCIMB 8052) (Clostridium acetobutylicum).